Here is a 335-residue protein sequence, read N- to C-terminus: Histidinol-phosphatase (335 aa).

This sequence belongs to the PHP hydrolase family. HisK subfamily.

It catalyses the reaction L-histidinol phosphate + H2O = L-histidinol + phosphate. The protein operates within amino-acid biosynthesis; L-histidine biosynthesis; L-histidine from 5-phospho-alpha-D-ribose 1-diphosphate: step 8/9. This is Histidinol-phosphatase (HIS2) from Saccharomyces cerevisiae (strain ATCC 204508 / S288c) (Baker's yeast).